We begin with the raw amino-acid sequence, 336 residues long: tRNA dimethylallyltransferase (336 aa).

Residue 19–26 participates in ATP binding; sequence GPTASGKT. 21-26 provides a ligand contact to substrate; the sequence is TASGKT.

The protein belongs to the IPP transferase family. Monomer. Requires Mg(2+) as cofactor.

It catalyses the reaction adenosine(37) in tRNA + dimethylallyl diphosphate = N(6)-dimethylallyladenosine(37) in tRNA + diphosphate. Catalyzes the transfer of a dimethylallyl group onto the adenine at position 37 in tRNAs that read codons beginning with uridine, leading to the formation of N6-(dimethylallyl)adenosine (i(6)A). This Bifidobacterium adolescentis (strain ATCC 15703 / DSM 20083 / NCTC 11814 / E194a) protein is tRNA dimethylallyltransferase.